The primary structure comprises 399 residues: ATP phosphoribosyltransferase regulatory subunit (399 aa).

This sequence belongs to the class-II aminoacyl-tRNA synthetase family. HisZ subfamily. In terms of assembly, heteromultimer composed of HisG and HisZ subunits.

It is found in the cytoplasm. It functions in the pathway amino-acid biosynthesis; L-histidine biosynthesis; L-histidine from 5-phospho-alpha-D-ribose 1-diphosphate: step 1/9. In terms of biological role, required for the first step of histidine biosynthesis. May allow the feedback regulation of ATP phosphoribosyltransferase activity by histidine. This is ATP phosphoribosyltransferase regulatory subunit from Symbiobacterium thermophilum (strain DSM 24528 / JCM 14929 / IAM 14863 / T).